The sequence spans 320 residues: Beta-sarcoglycan (320 aa).

Residues 1–10 (MAAAAAAAAA) are compositionally biased toward low complexity. Residues 1 to 34 (MAAAAAAAAATEQQGSNGPVKKSMREKAVERRNV) form a disordered region. The Cytoplasmic segment spans residues 1 to 67 (MAAAAAAAAA…GLRGRKGNLA (67 aa)). Basic and acidic residues predominate over residues 23 to 34 (SMREKAVERRNV). A helical; Signal-anchor for type II membrane protein transmembrane segment spans residues 68-88 (ICVIVLLFILAVINLLITLVI). The Extracellular segment spans residues 89-320 (WAVIRIGPNG…VSDNPCGNTH (232 aa)). Asparagine 160, asparagine 213, and asparagine 260 each carry an N-linked (GlcNAc...) asparagine glycan. 2 disulfide bridges follow: cysteine 290–cysteine 316 and cysteine 292–cysteine 309.

It belongs to the sarcoglycan beta/delta/gamma/zeta family. In terms of assembly, cross-link to form 2 major subcomplexes: one consisting of SGCB, SGCD and SGCG and the other consisting of SGCB and SGCD. The association between SGCB and SGCG is particularly strong while SGCA is loosely associated with the other sarcoglycans. In terms of processing, disulfide bonds are present. In terms of tissue distribution, most strongly expressed in skeletal and heart muscle. Also detected in proliferating myoblasts.

The protein localises to the cell membrane. It localises to the sarcolemma. The protein resides in the cytoplasm. Its subcellular location is the cytoskeleton. Component of the sarcoglycan complex, a subcomplex of the dystrophin-glycoprotein complex which forms a link between the F-actin cytoskeleton and the extracellular matrix. This is Beta-sarcoglycan (Sgcb) from Mus musculus (Mouse).